Here is a 486-residue protein sequence, read N- to C-terminus: Mitogen-activated protein kinase 17 (486 aa).

The Protein kinase domain occupies 16–307; the sequence is YQIQEVVGKG…AEEALADPYF (292 aa). ATP contacts are provided by residues 22-30 and K45; that span reads VGKGSYGVV. The active-site Proton acceptor is the D142. A Phosphothreonine modification is found at T178. A TXY motif is present at residues 178–180; that stretch reads TDY. Y180 bears the Phosphotyrosine mark. Residue T183 is modified to Phosphothreonine. The disordered stretch occupies residues 386–455; it reads EEHNDDEEEH…LSSQKASQVD (70 aa). The segment covering 422–433 has biased composition (low complexity); the sequence is SVHAQSSSASVV. Over residues 440–452 the composition is skewed to polar residues; the sequence is PNTATGLSSQKAS.

It belongs to the protein kinase superfamily. CMGC Ser/Thr protein kinase family. MAP kinase subfamily. Dually phosphorylated on Thr-178 and Tyr-180, which activates the enzyme.

The enzyme catalyses L-seryl-[protein] + ATP = O-phospho-L-seryl-[protein] + ADP + H(+). The catalysed reaction is L-threonyl-[protein] + ATP = O-phospho-L-threonyl-[protein] + ADP + H(+). With respect to regulation, activated by threonine and tyrosine phosphorylation. In Arabidopsis thaliana (Mouse-ear cress), this protein is Mitogen-activated protein kinase 17 (MPK17).